A 759-amino-acid polypeptide reads, in one-letter code: DNA replication licensing factor mcm-5 (759 aa).

The region spanning 330–536 (AYELIAKSIA…KDATLAKHVI (207 aa)) is the MCM domain. ADP is bound at residue arginine 370. The Arginine finger motif lies at 511–514 (SRFD).

The protein belongs to the MCM family. Component of the mcm2-7 complex. The complex forms a toroidal hexameric ring with the proposed subunit order mcm2-mcm6-mcm4-mcm7-mcm3-mcm5 (By simililarity).

The protein localises to the nucleus. Its subcellular location is the cytoplasm. The protein resides in the cytosol. It carries out the reaction ATP + H2O = ADP + phosphate + H(+). Acts as a component of the MCM2-7 complex (MCM complex) which is the replicative helicase essential for 'once per cell cycle' DNA replication initiation and elongation in eukaryotic cells. Core component of CDC45-MCM-GINS (CMG) helicase, the molecular machine that unwinds template DNA during replication, and around which the replisome is built. The active ATPase sites in the MCM2-7 ring are formed through the interaction surfaces of two neighboring subunits such that a critical structure of a conserved arginine finger motif is provided in trans relative to the ATP-binding site of the Walker A box of the adjacent subunit. The six ATPase active sites, however, are likely to contribute differentially to the complex helicase activity. The polypeptide is DNA replication licensing factor mcm-5 (mcm-5) (Caenorhabditis elegans).